The following is a 401-amino-acid chain: NADH-quinone oxidoreductase subunit D 2 (401 aa).

This sequence belongs to the complex I 49 kDa subunit family. As to quaternary structure, NDH-1 is composed of 14 different subunits. Subunits NuoB, C, D, E, F, and G constitute the peripheral sector of the complex.

Its subcellular location is the cell inner membrane. The enzyme catalyses a quinone + NADH + 5 H(+)(in) = a quinol + NAD(+) + 4 H(+)(out). Its function is as follows. NDH-1 shuttles electrons from NADH, via FMN and iron-sulfur (Fe-S) centers, to quinones in the respiratory chain. The immediate electron acceptor for the enzyme in this species is believed to be ubiquinone. Couples the redox reaction to proton translocation (for every two electrons transferred, four hydrogen ions are translocated across the cytoplasmic membrane), and thus conserves the redox energy in a proton gradient. The sequence is that of NADH-quinone oxidoreductase subunit D 2 from Thermodesulfovibrio yellowstonii (strain ATCC 51303 / DSM 11347 / YP87).